The sequence spans 278 residues: Juvenile hormone acid O-methyltransferase (278 aa).

The protein belongs to the methyltransferase superfamily. In terms of tissue distribution, specifically expressed in the corpora allata (CA).

The enzyme catalyses (2E,6E)-farnesoate + S-adenosyl-L-methionine = methyl (2E,6E)-farnesoate + S-adenosyl-L-homocysteine. The catalysed reaction is juvenile hormone III carboxylate + S-adenosyl-L-methionine = juvenile hormone III + S-adenosyl-L-homocysteine. In terms of biological role, O-methyltransferase that transfers a methyl group from S-adenosyl-L-methionine (SAM) to the carboxyl group of juvenile hormone acids to produce active juvenile hormones in the corpora allata, the last step during juvenile hormone biosynthesis. Also able to methylate farnesoate to methyl farnesoate. The protein is Juvenile hormone acid O-methyltransferase of Bombyx mori (Silk moth).